Consider the following 343-residue polypeptide: Outer envelope pore protein 37, chloroplastic (343 aa).

Polar residues-rich tracts occupy residues 1-11 (MADPSSQNPNL) and 23-43 (THQI…PCST). A disordered region spans residues 1–43 (MADPSSQNPNLATPPPPSSPSPTHQIQSGTSELSPPSRPPCST). Residues 1 to 73 (MADPSSQNPN…DSLLFLNKVS (73 aa)) constitute a chloroplast transit peptide. Over 74–76 (CKL) the chain is Cytoplasmic. Residues 77–86 (FDNLAKLKLS) traverse the membrane as a beta stranded segment. Over 87–103 (FQNNSQREISQPQVSFT) the chain is Chloroplast intermembrane. The beta stranded transmembrane segment at 104 to 113 (SKHVSVLYDV) threads the bilayer. The Cytoplasmic portion of the chain corresponds to 114–129 (EEKNTFIKSTLDVHPR). A beta stranded membrane pass occupies residues 130-137 (LQLRALHN). Over 138-154 (VKAQQGEVAMEANLTEP) the chain is Chloroplast intermembrane. The beta stranded transmembrane segment at 155–164 (GYSLELSSPV) threads the bilayer. The Cytoplasmic portion of the chain corresponds to 165 to 169 (PIGYP). Residues 170–178 (RATLKFPLG) form a beta stranded membrane-spanning segment. The Chloroplast intermembrane portion of the chain corresponds to 179-219 (EISLQEKDEEEEEKQKRTLSVNGILKRQVMNGVCTALYTDE). Residues 220–228 (ELRLRYAYK) form a beta stranded membrane-spanning segment. The Cytoplasmic segment spans residues 229-230 (DD). A beta stranded transmembrane segment spans residues 231 to 240 (ALSFIPSISL). A topological domain (chloroplast intermembrane) is located at residue Pro-241. The beta stranded transmembrane segment at 242–250 (SNAASFAFK) threads the bilayer. At 251 to 257 (RRFSPSD) the chain is on the cytoplasmic side. Residues 258 to 267 (KLSYWYNFDS) form a beta stranded membrane-spanning segment. The Chloroplast intermembrane segment spans residues 268–269 (NM). A beta stranded transmembrane segment spans residues 270–279 (WSAVYKRTYG). The Cytoplasmic segment spans residues 280 to 286 (KDYKLKA). A beta stranded transmembrane segment spans residues 287 to 296 (GYDSDVRLGW). The Chloroplast intermembrane segment spans residues 297 to 316 (ASLWVGDEAGKVKTTPMKMK). Residues 317–326 (VQFMLQVPQD) traverse the membrane as a beta stranded segment. Residues 327–343 (DIKSSVLMFRVKKRWDI) are Cytoplasmic-facing.

Belongs to the plastid outer envelope porin OEP37 (TC 1.B.47) family. In terms of assembly, forms an hourglass-shaped multimeric complex. Ubiquitously expressed at low levels. Mostly present in cotyledons, and accumulates in seedlings and embryos.

It localises to the plastid. Its subcellular location is the chloroplast outer membrane. Voltage-dependent peptide-sensitive high conductance rectifying cation channel with a strong affinity for TIC32 that is imported into the chloroplast. Conductance is pH-dependent decreasing with decreasing pH values. This is Outer envelope pore protein 37, chloroplastic (OEP37) from Arabidopsis thaliana (Mouse-ear cress).